The primary structure comprises 267 residues: Methylglyoxal reductase DkgB (267 aa).

Catalysis depends on tyrosine 39, which acts as the Proton donor. Residue histidine 97 participates in substrate binding. 179–231 (MTLAYGKALKDEVIARIAVKHNATPVQVILAWAMGEGYSVIPSSTRRENLASN) provides a ligand contact to NADP(+).

This sequence belongs to the aldo/keto reductase family. In terms of assembly, monomer.

Its subcellular location is the cytoplasm. The enzyme catalyses hydroxyacetone + NADP(+) = methylglyoxal + NADPH + H(+). Its function is as follows. Aldo-keto reductase that significantly contributes to cellular methylglyoxal detoxification by catalyzing the NADPH-dependent conversion of methylglyoxal to acetol. The protein is Methylglyoxal reductase DkgB of Salmonella typhi.